A 132-amino-acid polypeptide reads, in one-letter code: Small ribosomal subunit protein uS8 (132 aa).

It belongs to the universal ribosomal protein uS8 family. Part of the 30S ribosomal subunit. Contacts proteins S5 and S12.

In terms of biological role, one of the primary rRNA binding proteins, it binds directly to 16S rRNA central domain where it helps coordinate assembly of the platform of the 30S subunit. The chain is Small ribosomal subunit protein uS8 from Borrelia garinii subsp. bavariensis (strain ATCC BAA-2496 / DSM 23469 / PBi) (Borreliella bavariensis).